An 873-amino-acid polypeptide reads, in one-letter code: MAFQSPLTFNDEQLTVAQLKSQLDLFANAQKQAFLNHHPVTDLVLSRAEYMDLLLTRLWRYYGFSEIHNISLVAVGGYGRGELHPLSDIDILVLSKHKLPGELETKLSEFITLLWDLRLEVGHAVRTVEECAAIGREDLTVATNLQEARLLCGSENTFQDLKKVVLSDSFWPSETFYRAKIQEQRERHARYHDTTYNLEPDIKSTPGGLRDIHTLSWVARRHFGATSLLEMSRYGFLTDAEYRELVECQDFLWRVRFALHIELKRYDNRLTFAHQIQVAEHLGFKGEGNRGIEMMMKEFYRTLRRVAELNKMLLKLFDQAIINGGETEPAVIINEDFQRRGRLIEARKPALFQARPETILDMFLHIANDSTIDSVSPPTLRQLRTARRRLNKFLHTIPEAREKFMELVRHPNALHRAFSLMHKLGVLAAYLPQWSQIVGQMQFDLFHVYTVDEHSVRLLNHINTFSYAKNHDKHPICCEVYPRLQKKELLLLAAIFHDIGKGRGGDHSEIGEKEAYDFCIEHGLSKPEAKLVSWLVRHHLLMSVTAQRRDIYDPEVITEFAKQVRDEERLEYLVCLTVADICATNPELWNSWKRTLLAELFYSTQRALRRGLENPVDVRERIRHNQQLASALLRKEGFTAREIEVLWQRFKADYFLRHTHKQIAWHCEHILRMDNPEQPLVLMSKKATRGGTEVFVYTKDQHALFATVVAELDRRNFNVHDAQIMSSKDGYVLDTFMVLDQHGQAIDVDNHKAVIKHLMHVLADGRPTKVKTRRTPYKLQHFKVKTKVDFLPTKSKKRTLMELVALDTPGLLAITGATFADMGFNLHGAKITTIGERAEDLFILTSENGGRLSEEQELQLREKLIHNIAELAP.

Residues 1-332 (MAFQSPLTFN…NGGETEPAVI (332 aa)) form a uridylyltransferase region. The segment at 333–692 (INEDFQRRGR…MSKKATRGGT (360 aa)) is uridylyl-removing. One can recognise an HD domain in the interval 451–573 (VDEHSVRLLN…VRDEERLEYL (123 aa)). ACT domains lie at 693 to 773 (EVFV…VKTR) and 800 to 873 (LMEL…ELAP).

This sequence belongs to the GlnD family. Mg(2+) is required as a cofactor.

The enzyme catalyses [protein-PII]-L-tyrosine + UTP = [protein-PII]-uridylyl-L-tyrosine + diphosphate. It catalyses the reaction [protein-PII]-uridylyl-L-tyrosine + H2O = [protein-PII]-L-tyrosine + UMP + H(+). Uridylyltransferase (UTase) activity is inhibited by glutamine, while glutamine activates uridylyl-removing (UR) activity. Its function is as follows. Modifies, by uridylylation and deuridylylation, the PII regulatory proteins (GlnB and homologs), in response to the nitrogen status of the cell that GlnD senses through the glutamine level. Under low glutamine levels, catalyzes the conversion of the PII proteins and UTP to PII-UMP and PPi, while under higher glutamine levels, GlnD hydrolyzes PII-UMP to PII and UMP (deuridylylation). Thus, controls uridylylation state and activity of the PII proteins, and plays an important role in the regulation of nitrogen assimilation and metabolism. The chain is Bifunctional uridylyltransferase/uridylyl-removing enzyme from Vibrio vulnificus (strain CMCP6).